A 421-amino-acid chain; its full sequence is Serine--tRNA ligase (421 aa).

An L-serine-binding site is contributed by 229–231; that stretch reads TAE. ATP is bound at residue 260-262; it reads RSE. Glu-283 lines the L-serine pocket. Residue 347 to 350 coordinates ATP; the sequence is EISS. Ser-382 contacts L-serine.

This sequence belongs to the class-II aminoacyl-tRNA synthetase family. Type-1 seryl-tRNA synthetase subfamily. As to quaternary structure, homodimer. The tRNA molecule binds across the dimer.

The protein localises to the cytoplasm. The catalysed reaction is tRNA(Ser) + L-serine + ATP = L-seryl-tRNA(Ser) + AMP + diphosphate + H(+). It catalyses the reaction tRNA(Sec) + L-serine + ATP = L-seryl-tRNA(Sec) + AMP + diphosphate + H(+). It functions in the pathway aminoacyl-tRNA biosynthesis; selenocysteinyl-tRNA(Sec) biosynthesis; L-seryl-tRNA(Sec) from L-serine and tRNA(Sec): step 1/1. In terms of biological role, catalyzes the attachment of serine to tRNA(Ser). Is also able to aminoacylate tRNA(Sec) with serine, to form the misacylated tRNA L-seryl-tRNA(Sec), which will be further converted into selenocysteinyl-tRNA(Sec). This is Serine--tRNA ligase from Symbiobacterium thermophilum (strain DSM 24528 / JCM 14929 / IAM 14863 / T).